The chain runs to 220 residues: Sugar transporter SWEET1 (220 aa).

7 helical membrane passes run 9–29 (LMTF…IMPL), 44–64 (VAGL…SYAL), 70–90 (TMLF…FNYW), 106–126 (VMIA…NTVD), 138–158 (LSSV…AIVI), 167–187 (IINV…FGLL), and 191–211 (IYIY…LTLI). The MtN3/slv 1 domain occupies 12 to 92 (FIQFCATFIT…IYYVFNYWKN (81 aa)). Residues 134–217 (RLGFLSSVVC…LTLIKLYPPQ (84 aa)) form the MtN3/slv 2 domain.

Belongs to the SWEET sugar transporter family.

The protein localises to the golgi apparatus membrane. Its subcellular location is the cell membrane. Its function is as follows. Mediates both low-affinity uptake and efflux of sugar across the membrane. The chain is Sugar transporter SWEET1 (slc50a1) from Dictyostelium discoideum (Social amoeba).